The primary structure comprises 331 residues: Adenosine deaminase (331 aa).

Zn(2+)-binding residues include His12 and His14. Substrate-binding residues include His14, Asp16, and Gly170. Position 197 (His197) interacts with Zn(2+). Residue Glu200 is the Proton donor of the active site. Position 278 (Asp278) interacts with Zn(2+). Asp279 is a substrate binding site.

The protein belongs to the metallo-dependent hydrolases superfamily. Adenosine and AMP deaminases family. Adenosine deaminase subfamily. The cofactor is Zn(2+).

The enzyme catalyses adenosine + H2O + H(+) = inosine + NH4(+). The catalysed reaction is 2'-deoxyadenosine + H2O + H(+) = 2'-deoxyinosine + NH4(+). In terms of biological role, catalyzes the hydrolytic deamination of adenosine and 2-deoxyadenosine. The sequence is that of Adenosine deaminase from Shewanella sp. (strain MR-4).